Consider the following 199-residue polypeptide: Neurotrophic factor BDNF precursor form (199 aa).

A disordered region spans residues 1 to 23 (GQGSLAYPGLRTQGNLETLSGPN). Positions 1–100 (GQGSLAYPGL…AANMSMRVRR (100 aa)) are excised as a propeptide. Polar residues predominate over residues 12 to 23 (TQGNLETLSGPN). N93 is a glycosylation site (N-linked (GlcNAc...) asparagine). A disulfide bridge connects residues C113 and C180.

Belongs to the NGF-beta family.

Its subcellular location is the secreted. Its function is as follows. Promotes the survival of neuronal populations that are all located either in the central nervous system or directly connected to it. The sequence is that of Neurotrophic factor BDNF precursor form (BDNF) from Eunectes notaeus (Yellow anaconda).